Reading from the N-terminus, the 212-residue chain is MPIREIRHPLIRHKLGLMRRADISTKNFRELAQEVGALLTYEATADLTLESYDIQGWAGTVSVEKIAGKKITVVPILRAGIGMLDGVLSLIPGAKVSAVGVARNEETLQAHTYLEKLVPEIDERLAMIIDPMLATGSSMVATIDLLKKAGCKEIRAMVLVAAPEGIAAVERAHPDVMIYTASIDERLNEHGYIIPGLGDAGDKIFGTKQKDA.

5-phospho-alpha-D-ribose 1-diphosphate is bound by residues R78, R103, and 130 to 138 (DPMLATGSS). Residues I193 and 198 to 200 (GDA) each bind uracil. A 5-phospho-alpha-D-ribose 1-diphosphate-binding site is contributed by D199.

This sequence belongs to the UPRTase family. It depends on Mg(2+) as a cofactor.

It catalyses the reaction UMP + diphosphate = 5-phospho-alpha-D-ribose 1-diphosphate + uracil. It functions in the pathway pyrimidine metabolism; UMP biosynthesis via salvage pathway; UMP from uracil: step 1/1. Its activity is regulated as follows. Allosterically activated by GTP. Its function is as follows. Catalyzes the conversion of uracil and 5-phospho-alpha-D-ribose 1-diphosphate (PRPP) to UMP and diphosphate. The chain is Uracil phosphoribosyltransferase from Pseudomonas syringae pv. tomato (strain ATCC BAA-871 / DC3000).